A 296-amino-acid polypeptide reads, in one-letter code: GTPase Era (296 aa).

In terms of domain architecture, Era-type G spans 7-174; the sequence is RTGFVAIVGR…LEEIAQRLPE (168 aa). The tract at residues 15–22 is G1; the sequence is GRPNVGKS. A GTP-binding site is contributed by 15–22; it reads GRPNVGKS. Positions 41–45 are G2; sequence QTTRH. The segment at 62 to 65 is G3; it reads DTPG. GTP-binding positions include 62-66 and 123-126; these read DTPGF and SKID. A G4 region spans residues 123 to 126; that stretch reads SKID. The segment at 153–155 is G5; it reads VSA. The region spanning 197 to 281 is the KH type-2 domain; it reads VREKIFRLVG…HLEVYIKVRK (85 aa).

This sequence belongs to the TRAFAC class TrmE-Era-EngA-EngB-Septin-like GTPase superfamily. Era GTPase family. In terms of assembly, monomer.

The protein localises to the cytoplasm. The protein resides in the cell inner membrane. Functionally, an essential GTPase that binds both GDP and GTP, with rapid nucleotide exchange. Plays a role in 16S rRNA processing and 30S ribosomal subunit biogenesis and possibly also in cell cycle regulation and energy metabolism. This chain is GTPase Era, found in Bordetella avium (strain 197N).